The following is a 493-amino-acid chain: Aspartyl/glutamyl-tRNA(Asn/Gln) amidotransferase subunit B (493 aa).

It belongs to the GatB/GatE family. GatB subfamily. In terms of assembly, heterotrimer of A, B and C subunits.

It catalyses the reaction L-glutamyl-tRNA(Gln) + L-glutamine + ATP + H2O = L-glutaminyl-tRNA(Gln) + L-glutamate + ADP + phosphate + H(+). The enzyme catalyses L-aspartyl-tRNA(Asn) + L-glutamine + ATP + H2O = L-asparaginyl-tRNA(Asn) + L-glutamate + ADP + phosphate + 2 H(+). Its function is as follows. Allows the formation of correctly charged Asn-tRNA(Asn) or Gln-tRNA(Gln) through the transamidation of misacylated Asp-tRNA(Asn) or Glu-tRNA(Gln) in organisms which lack either or both of asparaginyl-tRNA or glutaminyl-tRNA synthetases. The reaction takes place in the presence of glutamine and ATP through an activated phospho-Asp-tRNA(Asn) or phospho-Glu-tRNA(Gln). This is Aspartyl/glutamyl-tRNA(Asn/Gln) amidotransferase subunit B from Aromatoleum aromaticum (strain DSM 19018 / LMG 30748 / EbN1) (Azoarcus sp. (strain EbN1)).